A 142-amino-acid polypeptide reads, in one-letter code: Large ribosomal subunit protein uL13 (142 aa).

Belongs to the universal ribosomal protein uL13 family. Part of the 50S ribosomal subunit.

Functionally, this protein is one of the early assembly proteins of the 50S ribosomal subunit, although it is not seen to bind rRNA by itself. It is important during the early stages of 50S assembly. In Xanthomonas oryzae pv. oryzae (strain MAFF 311018), this protein is Large ribosomal subunit protein uL13.